We begin with the raw amino-acid sequence, 228 residues long: RNA chaperone ProQ (228 aa).

Residues 107–178 (KARVQAQRAE…REEKHTPVSD (72 aa)) are disordered. Basic and acidic residues-rich tracts occupy residues 117–136 (QQAK…DAPR) and 146–175 (RRKE…KHTP).

This sequence belongs to the ProQ family.

The protein localises to the cytoplasm. In terms of biological role, RNA chaperone with significant RNA binding, RNA strand exchange and RNA duplexing activities. May regulate ProP activity through an RNA-based, post-transcriptional mechanism. The chain is RNA chaperone ProQ from Salmonella agona (strain SL483).